The chain runs to 272 residues: Formamidopyrimidine-DNA glycosylase (272 aa).

Residue Pro-2 is the Schiff-base intermediate with DNA of the active site. Glu-3 (proton donor) is an active-site residue. Lys-58 (proton donor; for beta-elimination activity) is an active-site residue. His-93, Arg-112, and Arg-153 together coordinate DNA. Residues 238 to 272 (HVYGKSGQHCPKCGNILEDLKISNRGTVYCPHCQR) form an FPG-type zinc finger. Catalysis depends on Arg-262, which acts as the Proton donor; for delta-elimination activity.

Belongs to the FPG family. As to quaternary structure, monomer. Requires Zn(2+) as cofactor.

It catalyses the reaction Hydrolysis of DNA containing ring-opened 7-methylguanine residues, releasing 2,6-diamino-4-hydroxy-5-(N-methyl)formamidopyrimidine.. The enzyme catalyses 2'-deoxyribonucleotide-(2'-deoxyribose 5'-phosphate)-2'-deoxyribonucleotide-DNA = a 3'-end 2'-deoxyribonucleotide-(2,3-dehydro-2,3-deoxyribose 5'-phosphate)-DNA + a 5'-end 5'-phospho-2'-deoxyribonucleoside-DNA + H(+). Its function is as follows. Involved in base excision repair of DNA damaged by oxidation or by mutagenic agents. Acts as a DNA glycosylase that recognizes and removes damaged bases. Has a preference for oxidized purines, such as 7,8-dihydro-8-oxoguanine (8-oxoG). Has AP (apurinic/apyrimidinic) lyase activity and introduces nicks in the DNA strand. Cleaves the DNA backbone by beta-delta elimination to generate a single-strand break at the site of the removed base with both 3'- and 5'-phosphates. The polypeptide is Formamidopyrimidine-DNA glycosylase (Dichelobacter nodosus (strain VCS1703A)).